The primary structure comprises 671 residues: UvrABC system protein B (671 aa).

One can recognise a Helicase ATP-binding domain in the interval glutamate 26 to arginine 183. Glycine 39–threonine 46 serves as a coordination point for ATP. Residues tyrosine 92–valine 115 carry the Beta-hairpin motif. The Helicase C-terminal domain maps to glutamine 431–leucine 597. In terms of domain architecture, UVR spans aspartate 631 to glutamine 666.

It belongs to the UvrB family. Forms a heterotetramer with UvrA during the search for lesions. Interacts with UvrC in an incision complex.

It localises to the cytoplasm. In terms of biological role, the UvrABC repair system catalyzes the recognition and processing of DNA lesions. A damage recognition complex composed of 2 UvrA and 2 UvrB subunits scans DNA for abnormalities. Upon binding of the UvrA(2)B(2) complex to a putative damaged site, the DNA wraps around one UvrB monomer. DNA wrap is dependent on ATP binding by UvrB and probably causes local melting of the DNA helix, facilitating insertion of UvrB beta-hairpin between the DNA strands. Then UvrB probes one DNA strand for the presence of a lesion. If a lesion is found the UvrA subunits dissociate and the UvrB-DNA preincision complex is formed. This complex is subsequently bound by UvrC and the second UvrB is released. If no lesion is found, the DNA wraps around the other UvrB subunit that will check the other stand for damage. This is UvrABC system protein B from Yersinia pseudotuberculosis serotype IB (strain PB1/+).